We begin with the raw amino-acid sequence, 465 residues long: Cysteine--tRNA ligase (465 aa).

Cys27 is a binding site for Zn(2+). Positions 29–39 (PTVYDDAHLGH) match the 'HIGH' region motif. Cys207, His237, and Glu241 together coordinate Zn(2+). A 'KMSKS' region motif is present at residues 269–273 (KMSKS). An ATP-binding site is contributed by Lys272.

The protein belongs to the class-I aminoacyl-tRNA synthetase family. In terms of assembly, monomer. The cofactor is Zn(2+).

Its subcellular location is the cytoplasm. The enzyme catalyses tRNA(Cys) + L-cysteine + ATP = L-cysteinyl-tRNA(Cys) + AMP + diphosphate. In Nitratiruptor sp. (strain SB155-2), this protein is Cysteine--tRNA ligase.